The following is a 247-amino-acid chain: Carboxy-S-adenosyl-L-methionine synthase (247 aa).

Residues tyrosine 39, 64–66 (GCS), 89–90 (DN), 117–118 (DI), asparagine 132, and arginine 199 contribute to the S-adenosyl-L-methionine site.

This sequence belongs to the class I-like SAM-binding methyltransferase superfamily. Cx-SAM synthase family. Homodimer.

It carries out the reaction prephenate + S-adenosyl-L-methionine = carboxy-S-adenosyl-L-methionine + 3-phenylpyruvate + H2O. Functionally, catalyzes the conversion of S-adenosyl-L-methionine (SAM) to carboxy-S-adenosyl-L-methionine (Cx-SAM). This is Carboxy-S-adenosyl-L-methionine synthase from Salmonella agona (strain SL483).